The sequence spans 535 residues: Expansin-like protein 9 (535 aa).

The signal sequence occupies residues 1-25; that stretch reads MKINKNNYFKIIIFIIYVIINLINA. An N-linked (GlcNAc...) asparagine glycan is attached at Asn-24. The Extracellular portion of the chain corresponds to 26 to 514; that stretch reads SDNVKLSNCG…DNSSNILLFS (489 aa). The region spanning 31–144 is the Expansin-like EG45 domain; the sequence is LSNCGQARAE…QEVSCGFLGN (114 aa). Cystine bridges form between Cys-34–Cys-75 and Cys-78–Cys-139. N-linked (GlcNAc...) asparagine glycosylation is found at Asn-122, Asn-257, and Asn-292. Residues 459–487 are disordered; the sequence is VDGSSNDDDGTGGTGGGASNKVGKRVDGE. The N-linked (GlcNAc...) asparagine glycan is linked to Asn-506. Residues 515 to 535 form a helical membrane-spanning segment; sequence FNITLTFLLLSLIINILLLLF.

The protein belongs to the expansin family. Expansin A subfamily.

It is found in the membrane. In terms of biological role, may serve to lubricate the movement of the cellulose microfibrils during cell growth and wall extension and/or may serve to maintain the fluid state of the slug cell wall. The protein is Expansin-like protein 9 (expl9) of Dictyostelium discoideum (Social amoeba).